Here is a 356-residue protein sequence, read N- to C-terminus: Dynein regulatory complex protein 10 (356 aa).

Residues 126-167 are a coiled coil; that stretch reads SNREFFEEVRDREERAVAEQEQLKQKLKLQRVELQKAAGTIQ. Residues 173-209 form a disordered region; it reads ARGEVSEVQSSTQQSRAAIEGSARAQSEADKSSFQSD. Positions 178–187 are enriched in low complexity; that stretch reads SEVQSSTQQS. Residues 197–287 adopt a coiled-coil conformation; sequence AQSEADKSSF…LRQLQEYNSG (91 aa). The IQ domain occupies 319 to 348; sequence QNHAARVIQSYWRGFKKAREAAKKKAKKLE.

Belongs to the DRC10 family. Component of the nexin-dynein regulatory complex (N-DRC).

The protein resides in the cytoplasm. The protein localises to the cytoskeleton. It is found in the flagellum axoneme. Functionally, component of the nexin-dynein regulatory complex (N-DRC), a key regulator of ciliary/flagellar motility which maintains the alignment and integrity of the distal axoneme and regulates microtubule sliding in motile axonemes. The sequence is that of Dynein regulatory complex protein 10 from Chlamydomonas reinhardtii (Chlamydomonas smithii).